Reading from the N-terminus, the 118-residue chain is UPF0058 protein MJ1132 (118 aa).

This sequence belongs to the UPF0058 family.

In Methanocaldococcus jannaschii (strain ATCC 43067 / DSM 2661 / JAL-1 / JCM 10045 / NBRC 100440) (Methanococcus jannaschii), this protein is UPF0058 protein MJ1132.